Reading from the N-terminus, the 301-residue chain is 4-diphosphocytidyl-2-C-methyl-D-erythritol kinase (301 aa).

Lys18 is a catalytic residue. Residue 109–119 coordinates ATP; sequence PIASGIGGGSA. Asp151 is an active-site residue.

It belongs to the GHMP kinase family. IspE subfamily.

It catalyses the reaction 4-CDP-2-C-methyl-D-erythritol + ATP = 4-CDP-2-C-methyl-D-erythritol 2-phosphate + ADP + H(+). It functions in the pathway isoprenoid biosynthesis; isopentenyl diphosphate biosynthesis via DXP pathway; isopentenyl diphosphate from 1-deoxy-D-xylulose 5-phosphate: step 3/6. Functionally, catalyzes the phosphorylation of the position 2 hydroxy group of 4-diphosphocytidyl-2C-methyl-D-erythritol. The sequence is that of 4-diphosphocytidyl-2-C-methyl-D-erythritol kinase from Rhizobium meliloti (strain 1021) (Ensifer meliloti).